The following is a 497-amino-acid chain: MEQPPASKSKLKKLSEDSLTKQPEEVFDVLEKLGEGSYGSVFKAIHKESGQVVAIKQVPVESDLQEIIKEISIMQQCDSPYVVKYYGSYFKNTDLWIVMEYCGAGSVSDIIRLRNKTLTEDEIATILKSTLKGLEYLHFMRKIHRDIKAGNILLNTEGHAKLADFGVAGQLTDTMAKRNTVIGTPFWMAPEVIQEIGYNCVADIWSLGITSIEMAEGKPPYADIHPMRAIFMIPTNPPPTFRKPELWSDDFTDFVKKCLVKSPEQRATATQLLQHPFIKNAKPVSILRDLIAEAMEIKAKRHEEQQRELEEEEENSDEDELDSHTMVKTSSESVGTMRATSTMSEGAQTMIEHNSTMLESDLGTMVINSEEEEEEEEEEEEDGTMKRNATSPQVQRPSFMDYFDKQDFKNKSHENCDQSMREPGPMSNSVFPDNWRVPQDGDFDFLKNLSLEELQMRLKALDPMMEREIEELHQRYSAKRQPILDAMDAKKRRQQNF.

Position 1 is an N-acetylmethionine (M1). Residues 1–20 are disordered; that stretch reads MEQPPASKSKLKKLSEDSLT. S15 carries the phosphoserine modification. A Protein kinase domain is found at 27 to 278; sequence FDVLEKLGEG…ATQLLQHPFI (252 aa). ATP-binding positions include 33 to 41 and K56; that span reads LGEGSYGSV. T117 carries the post-translational modification Phosphothreonine; by PKB/AKT1. The Proton acceptor role is filled by D146. 2 residues coordinate Mg(2+): N151 and D164. A Phosphothreonine; by autocatalysis modification is found at T180. Residues 287–328 are a coiled coil; the sequence is LRDLIAEAMEIKAKRHEEQQRELEEEEENSDEDELDSHTMVK. 2 disordered regions span residues 301-343 and 368-394; these read RHEE…TSTM and NSEEEEEEEEEEEEDGTMKRNATSPQV. Acidic residues predominate over residues 309-321; sequence LEEEEENSDEDEL. S316 is subject to Phosphoserine. The segment covering 326–343 has biased composition (polar residues); sequence MVKTSSESVGTMRATSTM. Position 336 is a phosphothreonine (T336). Residues 366-387 are a coiled coil; that stretch reads VINSEEEEEEEEEEEEDGTMKR. The span at 369–382 shows a compositional bias: acidic residues; sequence SEEEEEEEEEEEED. Position 384 is a phosphothreonine (T384). T390 is subject to Phosphothreonine; by PKB/AKT1. Phosphoserine is present on residues S391 and S450. The SARAH domain occupies 443–490; that stretch reads FDFLKNLSLEELQMRLKALDPMMEREIEELHQRYSAKRQPILDAMDAK. Residues 448-479 adopt a coiled-coil conformation; the sequence is NLSLEELQMRLKALDPMMEREIEELHQRYSAK.

It belongs to the protein kinase superfamily. STE Ser/Thr protein kinase family. STE20 subfamily. Homodimer; mediated via the coiled-coil region. Interacts with NORE1, which inhibits autoactivation. Interacts with and stabilizes SAV1. Interacts with RAF1, which prevents dimerization and phosphorylation. Interacts with RASSF1. Interacts (via SARAH domain) with isoform 1 of NEK2. Interacts with ESR1 only in the presence of SAV1. Interacts with PKB/AKT1. Forms a tripartite complex with MOBKL1B and STK38. Interacts with RASSF2 (via SARAH domain). Interacts with DLG5 (via PDZ domain 3). Interacts with LATS1; this interaction is inhibited in the presence of DLG5. Interacts with MARK3 in the presence of DLG5. Interacts with RASSF5; this interaction inhibits STK3 autoactivation through heterodimerization. Interacts (when phosphorylated) with SLMAP (via FHA domain); the interaction associates STK3 with the STRIPAK complex. It depends on Mg(2+) as a cofactor. Post-translationally, autophosphorylated on two residues Thr-174 and Thr-180, leading to activation. Phosphorylation at Thr-117 and Thr-390 by PKB/AKT1, leads to inhibition of its: cleavage, kinase activity, autophosphorylation at Thr-180, binding to RASSF1 and nuclear translocation, and increase in its binding to RAF1. Phosphorylated at Ser-15 by PLK1, leading to activation. In terms of processing, proteolytically cleaved by caspase-3 during apoptosis. Proteolytic cleavage results in kinase activation and nuclear translocation of the truncated form (MST1/N). Ubiquitinated by TRIM69; leading to its redistribution to the perinuclear cytoskeleton.

The protein localises to the cytoplasm. It localises to the nucleus. It catalyses the reaction L-seryl-[protein] + ATP = O-phospho-L-seryl-[protein] + ADP + H(+). The enzyme catalyses L-threonyl-[protein] + ATP = O-phospho-L-threonyl-[protein] + ADP + H(+). Inhibited by the C-terminal non-catalytic region. Activated by caspase-cleavage. Full activation also requires homodimerization and autophosphorylation of Thr-180, which are inhibited by the proto-oncogene product RAF1. Activated by RASSF1 which acts by preventing its dephosphorylation. When autophosphorylated at Thr-180, recruits STRIPAK complex and promotes PP2A-mediated dephosphorylation and inactivation of STK3. Stress-activated, pro-apoptotic kinase which, following caspase-cleavage, enters the nucleus and induces chromatin condensation followed by internucleosomal DNA fragmentation. Key component of the Hippo signaling pathway which plays a pivotal role in organ size control and tumor suppression by restricting proliferation and promoting apoptosis. The core of this pathway is composed of a kinase cascade wherein STK3/MST2 and STK4/MST1, in complex with its regulatory protein SAV1, phosphorylates and activates LATS1/2 in complex with its regulatory protein MOB1, which in turn phosphorylates and inactivates YAP1 oncoprotein and WWTR1/TAZ. Phosphorylation of YAP1 by LATS2 inhibits its translocation into the nucleus to regulate cellular genes important for cell proliferation, cell death, and cell migration. STK3/MST2 and STK4/MST1 are required to repress proliferation of mature hepatocytes, to prevent activation of facultative adult liver stem cells (oval cells), and to inhibit tumor formation. Phosphorylates NKX2-1. Phosphorylates NEK2 and plays a role in centrosome disjunction by regulating the localization of NEK2 to centrosomes, and its ability to phosphorylate CROCC and CEP250. In conjunction with SAV1, activates the transcriptional activity of ESR1 through the modulation of its phosphorylation. Positively regulates RAF1 activation via suppression of the inhibitory phosphorylation of RAF1 on 'Ser-259'. Phosphorylates MOBKL1A and RASSF2. Phosphorylates MOBKL1B on 'Thr-74'. Acts cooperatively with MOBKL1B to activate STK38. This chain is Serine/threonine-protein kinase 3 (Stk3), found in Mus musculus (Mouse).